An 804-amino-acid chain; its full sequence is Type 2 DNA topoisomerase 6 subunit B (804 aa).

Residues N58, D89, 110 to 111 (SR), 120 to 127 (GQQGIGIS), and K629 each bind ATP.

It belongs to the TOP6B family. In terms of assembly, homodimer. Heterotetramer of two Top6A and two Top6B chains.

It carries out the reaction ATP-dependent breakage, passage and rejoining of double-stranded DNA.. Functionally, relaxes both positive and negative superturns and exhibits a strong decatenase activity. In Halobacterium salinarum (strain ATCC 29341 / DSM 671 / R1), this protein is Type 2 DNA topoisomerase 6 subunit B.